The primary structure comprises 278 residues: MDTYMVVGNPIAQSKSPLIHTMFAAQTEQQLEYSRQLLEPGEFDAAAKTFFAGQGKGINITMPFKQDAYNFADELSPRALSAGAVNTLIKREDGSILGENTDGVGLINDITDNLNWTLSGRKVLIVGAGGAVGGILLPLMEQNPAEVLIVNRTASKAEELAARFASMGNIRGAGYGELSAAEGGSCSAFDVIINGTSTSLTGDLPPIPPAVITNTSCVYDMVYGAEPTPFMVWAQNHGAAATADGLGMLVGQAAESFYLWRGIRPDIAPVMAALRQSQ.

Residues 14-16 and Thr-61 contribute to the shikimate site; that span reads SKS. Residue Lys-65 is the Proton acceptor of the active site. Shikimate-binding residues include Asn-86 and Asp-102. NADP(+)-binding positions include 127-131, 151-156, and Met-221; these read GAGGA and NRTASK. Tyr-223 contributes to the shikimate binding site. Position 245 (Gly-245) interacts with NADP(+).

This sequence belongs to the shikimate dehydrogenase family. As to quaternary structure, homodimer.

The enzyme catalyses shikimate + NADP(+) = 3-dehydroshikimate + NADPH + H(+). It participates in metabolic intermediate biosynthesis; chorismate biosynthesis; chorismate from D-erythrose 4-phosphate and phosphoenolpyruvate: step 4/7. Its function is as follows. Involved in the biosynthesis of the chorismate, which leads to the biosynthesis of aromatic amino acids. Catalyzes the reversible NADPH linked reduction of 3-dehydroshikimate (DHSA) to yield shikimate (SA). This chain is Shikimate dehydrogenase (NADP(+)), found in Saccharophagus degradans (strain 2-40 / ATCC 43961 / DSM 17024).